Consider the following 360-residue polypeptide: Aminomethyltransferase (360 aa).

It belongs to the GcvT family. As to quaternary structure, the glycine cleavage system is composed of four proteins: P, T, L and H.

The enzyme catalyses N(6)-[(R)-S(8)-aminomethyldihydrolipoyl]-L-lysyl-[protein] + (6S)-5,6,7,8-tetrahydrofolate = N(6)-[(R)-dihydrolipoyl]-L-lysyl-[protein] + (6R)-5,10-methylene-5,6,7,8-tetrahydrofolate + NH4(+). In terms of biological role, the glycine cleavage system catalyzes the degradation of glycine. The chain is Aminomethyltransferase from Exiguobacterium sibiricum (strain DSM 17290 / CCUG 55495 / CIP 109462 / JCM 13490 / 255-15).